The following is a 247-amino-acid chain: Probable 2-phosphosulfolactate phosphatase (247 aa).

It belongs to the ComB family. Requires Mg(2+) as cofactor.

The catalysed reaction is (2R)-O-phospho-3-sulfolactate + H2O = (2R)-3-sulfolactate + phosphate. This Clostridium perfringens (strain SM101 / Type A) protein is Probable 2-phosphosulfolactate phosphatase.